Reading from the N-terminus, the 424-residue chain is Serpin A11 (424 aa).

A signal peptide spans 1–21; sequence MGPVWLWLWLLVAEVLLPVHC. N108, N171, N352, and N387 each carry an N-linked (GlcNAc...) asparagine glycan.

This sequence belongs to the serpin family.

It is found in the secreted. The chain is Serpin A11 (Serpina11) from Mus musculus (Mouse).